A 518-amino-acid polypeptide reads, in one-letter code: Sodium-dependent glucose transporter 1 (518 aa).

The next 12 helical transmembrane spans lie at 19 to 39, 53 to 73, 82 to 102, 107 to 127, 139 to 159, 221 to 241, 307 to 327, 347 to 367, 376 to 396, 400 to 420, 438 to 458, and 466 to 486; these read TFQD…FIFV, GFLV…SATT, CKTA…IGIL, NVLI…ALHF, LAKL…SDFH, FRRA…FFFY, TSSL…IATS, YTTI…LGEM, LQGK…ASIA, LFPV…KEDR, EEEN…EMIE, and SIIE…YNQY. Over residues 414–426 the composition is skewed to basic and acidic residues; it reads RQRKEDRKSEDQK. Residues 414-448 form a disordered region; it reads RQRKEDRKSEDQKALLSSSGLNEYEEENEEEDAEK. Residues 436–448 show a composition bias toward acidic residues; it reads EYEEENEEEDAEK.

Belongs to the major facilitator superfamily.

Its subcellular location is the apical cell membrane. May function as a sodium-dependent glucose transporter. Potential channels for urea in the inner medulla of kidney. This Homo sapiens (Human) protein is Sodium-dependent glucose transporter 1.